Here is a 258-residue protein sequence, read N- to C-terminus: DNA-directed RNA polymerase subunit Rpo3 (258 aa).

The protein belongs to the archaeal Rpo3/eukaryotic RPB3 RNA polymerase subunit family. In terms of assembly, part of the RNA polymerase complex.

It localises to the cytoplasm. The catalysed reaction is RNA(n) + a ribonucleoside 5'-triphosphate = RNA(n+1) + diphosphate. In terms of biological role, DNA-dependent RNA polymerase (RNAP) catalyzes the transcription of DNA into RNA using the four ribonucleoside triphosphates as substrates. The polypeptide is DNA-directed RNA polymerase subunit Rpo3 (Pyrobaculum calidifontis (strain DSM 21063 / JCM 11548 / VA1)).